A 333-amino-acid polypeptide reads, in one-letter code: tRNA (guanine(37)-N(1))/4-demethylwyosine(37)-methyltransferase Taw22 (333 aa).

Residues arginine 174, phenylalanine 191, 213-214 (EI), and 243-244 (DV) contribute to the S-adenosyl-L-methionine site.

It belongs to the class I-like SAM-binding methyltransferase superfamily. TRM5/TYW2 family.

The protein localises to the cytoplasm. It catalyses the reaction guanosine(37) in tRNA + S-adenosyl-L-methionine = N(1)-methylguanosine(37) in tRNA + S-adenosyl-L-homocysteine + H(+). It carries out the reaction 4-demethylwyosine(37) in tRNA(Phe) + S-adenosyl-L-methionine = isowyosine(37) in tRNA(Phe) + S-adenosyl-L-homocysteine + H(+). Its function is as follows. Catalyzes both the N1-methylation of guanosine and the C7-methylation of 4-demethylwyosine (imG-14) at position 37 in tRNA(Phe). This chain is tRNA (guanine(37)-N(1))/4-demethylwyosine(37)-methyltransferase Taw22, found in Pyrococcus abyssi (strain GE5 / Orsay).